The sequence spans 298 residues: tRNA dimethylallyltransferase 2 (298 aa).

10–17 (GPTASGKT) is an ATP binding site. Position 12–17 (12–17 (TASGKT)) interacts with substrate. The interval 35–38 (DSRQ) is interaction with substrate tRNA.

The protein belongs to the IPP transferase family. In terms of assembly, monomer. It depends on Mg(2+) as a cofactor.

The enzyme catalyses adenosine(37) in tRNA + dimethylallyl diphosphate = N(6)-dimethylallyladenosine(37) in tRNA + diphosphate. In terms of biological role, catalyzes the transfer of a dimethylallyl group onto the adenine at position 37 in tRNAs that read codons beginning with uridine, leading to the formation of N6-(dimethylallyl)adenosine (i(6)A). This chain is tRNA dimethylallyltransferase 2, found in Syntrophotalea carbinolica (strain DSM 2380 / NBRC 103641 / GraBd1) (Pelobacter carbinolicus).